Here is a 386-residue protein sequence, read N- to C-terminus: Patatin-06 (386 aa).

Positions 1–23 (MATTKSFLILFFMILATTSSTCA) are cleaved as a signal peptide. The region spanning 32-229 (LSIDGGGIKG…TVGDPALLSL (198 aa)) is the PNPLA domain. The GXGXXG motif lies at 36-41 (GGGIKG). Residues 75-79 (GTSTG) carry the GXSXG motif. The active-site Nucleophile is serine 77. The N-linked (GlcNAc...) asparagine glycan is linked to asparagine 115. Aspartate 215 functions as the Proton acceptor in the catalytic mechanism. Positions 215–217 (DGG) match the DGA/G motif. Positions 321–384 (ENALTGTTTE…NRKKLRANKA (64 aa)) form a coiled coil.

Belongs to the patatin family. Tuber.

The protein resides in the vacuole. Functionally, probable lipolytic acyl hydrolase (LAH), an activity which is thought to be involved in the response of tubers to pathogens. In Solanum tuberosum (Potato), this protein is Patatin-06.